Consider the following 479-residue polypeptide: Odorant receptor coreceptor (479 aa).

Residues 1 to 43 (MMKMKQQGLVADLLPNIRVMKFFGHFVFNYYDDNSSKYLHKIF) are Cytoplasmic-facing. A helical transmembrane segment spans residues 44–64 (CCVNLFLLLLQFALCAVNLII). The Extracellular segment spans residues 65-73 (ESADVDDLT). The helical transmembrane segment at 74 to 94 (ANTITLLFFTHSIVKIIYFAV) threads the bilayer. The Cytoplasmic portion of the chain corresponds to 95–133 (RSKYFYRTWAIWNNPNSHPLFAESNARYHAIALKKMRLL). The helical transmembrane segment at 134-154 (LFLVGATTVLSAIAWTVLTFF) threads the bilayer. At 155–190 (EHPIRKLVDPVTNETTIIELPQLLLRSYYPFDASKG) the chain is on the extracellular side. A glycan (N-linked (GlcNAc...) asparagine) is linked at asparagine 167. Residues 191-211 (IMHVIVLIYQFYWVLFMLIDA) form a helical membrane-spanning segment. Over 212–350 (NSLDVLFCSW…IVRLVTAVGD (139 aa)) the chain is Cytoplasmic. Residues 261–280 (SAEHLRESENQPPPPVPPQG) form a disordered region. The helical transmembrane segment at 351–371 (AYGFALLLHMLTTTITLTLLA) threads the bilayer. Over 372–383 (YQATKVNGVNVY) the chain is Extracellular. A helical membrane pass occupies residues 384 to 404 (AASTIGYIIYTFGQVFLFCIF). Residues 405-455 (GNRLIEESTSVMEAAYSCHWYDGSEEAKTFVQIVCQQCQKAMSISGAKFFT) are Cytoplasmic-facing. The chain crosses the membrane as a helical span at residues 456-476 (VSLDLFASVLGAVVTYFMVLV). Residues 477-479 (QLK) are Extracellular-facing.

It belongs to the insect chemoreceptor superfamily. Heteromeric odorant receptor channel (TC 1.A.69) family. Orco subfamily. As to quaternary structure, heterodimer with conventional odorant receptors (ORs).

The protein resides in the cell membrane. Its function is as follows. Odorant coreceptor which complexes with conventional odorant receptors (ORs) to form odorant-sensing units, providing sensitive and prolonged odorant signaling and calcium permeability. Obligate coreceptor of all odorant receptors. Orco is a universal and integral part of the functional odorant receptor, involved in the dendritic localization of other olfactory receptors. Can form functional ion channels in the absence of an odor-binding odorant receptor. Plays a central role in the perception of olfactory stimuli in ants and is essential for ant social organization. Required for pheromone sensing and mating behavior. Also required for the development and maintenance of odorant receptor neurons (ORNs) and of antennal lobe glomeruli. In Harpegnathos saltator (Jerdon's jumping ant), this protein is Odorant receptor coreceptor.